The sequence spans 200 residues: COMM domain-containing protein 7 (200 aa).

In terms of domain architecture, COMM spans 133–200 (QLIDMEWKFG…RVRTSMECFC (68 aa)).

It belongs to the COMM domain-containing protein 7 family. Component of the commander complex consisting of the CCC subcomplex and the retriever subcomplex. Component of the CCC (COMMD/CCDC22/CCDC93) subcomplex consisting of COMMD1, COMMD2, COMMD3, COMMD4, COMMD5, COMMD6, COMMD7, COMMD8, COMMD9, COMMD10, CCDC22 and CCDC93; within the complex forms a heterodimer with COMMD9. Interacts with RELA. Interacts with CCDC22, CCDC93, SCNN1B, CUL7. As to expression, widely expressed with highest expression in lung.

It is found in the cytoplasmic vesicle. Functionally, scaffold protein in the commander complex that is essential for endosomal recycling of transmembrane cargos; the commander complex is composed of the CCC subcomplex and the retriever subcomplex. May modulate activity of cullin-RING E3 ubiquitin ligase (CRL) complexes. Associates with the NF-kappa-B complex and suppresses its transcriptional activity. This chain is COMM domain-containing protein 7 (COMMD7), found in Homo sapiens (Human).